Here is a 171-residue protein sequence, read N- to C-terminus: Endoribonuclease YbeY (171 aa).

The Zn(2+) site is built by His130, His134, and His140.

This sequence belongs to the endoribonuclease YbeY family. Requires Zn(2+) as cofactor.

It is found in the cytoplasm. Its function is as follows. Single strand-specific metallo-endoribonuclease involved in late-stage 70S ribosome quality control and in maturation of the 3' terminus of the 16S rRNA. The protein is Endoribonuclease YbeY of Neisseria meningitidis serogroup C / serotype 2a (strain ATCC 700532 / DSM 15464 / FAM18).